We begin with the raw amino-acid sequence, 68 residues long: Conotoxin TsMMSK-021 (68 aa).

The first 20 residues, 1 to 20, serve as a signal peptide directing secretion; the sequence is MMSKLGVLLTICLLLFPLTA. Positions 21 to 52 are excised as a propeptide; the sequence is VRLDGDQHTDRPADRMQDIATEQHPLFDPVKR. Disulfide bonds link Cys-53–Cys-66, Cys-54–Cys-62, and Cys-58–Cys-65. Residue Pro-64 is modified to 4-hydroxyproline.

The protein belongs to the conotoxin M superfamily. Expressed by the venom duct.

It is found in the secreted. The chain is Conotoxin TsMMSK-021 from Conus tessulatus (Tessellate cone).